Consider the following 346-residue polypeptide: MLVLGIESSCDETGLALYDTQRGLLAHALHSQIAMHREYGGVVPELASRDHIRRALPLLEEVMAQSGTHRDDIDAIAFTQGPGLAGALLVGASIANALALAWNKPTVGIHHLEGHLLSPLLVDEPPPFPFIALLVSGGHTQLMRVTDVGVYETLGETLDDAAGEAFDKTAKLIGLGYPGGPEVSKLAETGTPGAVVLPRPMLHSGDLDFSFSGLKTAVLTQMKKFEAAKLDGEALERAKADLARGFVDAAVDVLVAKSLAALKQTKLKRLVVAGGVGANRQLRAALSAAAAKRGFDVHYPDLALCTDNGAMIALAGALRLGRWPEQANADYAFTVKPRWDLASLAR.

Positions 111 and 115 each coordinate Fe cation. Substrate is bound by residues 134–138 (LVSGG), D167, G180, and N279. D307 provides a ligand contact to Fe cation.

Belongs to the KAE1 / TsaD family. Fe(2+) serves as cofactor.

It localises to the cytoplasm. It catalyses the reaction L-threonylcarbamoyladenylate + adenosine(37) in tRNA = N(6)-L-threonylcarbamoyladenosine(37) in tRNA + AMP + H(+). Its function is as follows. Required for the formation of a threonylcarbamoyl group on adenosine at position 37 (t(6)A37) in tRNAs that read codons beginning with adenine. Is involved in the transfer of the threonylcarbamoyl moiety of threonylcarbamoyl-AMP (TC-AMP) to the N6 group of A37, together with TsaE and TsaB. TsaD likely plays a direct catalytic role in this reaction. The polypeptide is tRNA N6-adenosine threonylcarbamoyltransferase (Burkholderia ambifaria (strain ATCC BAA-244 / DSM 16087 / CCUG 44356 / LMG 19182 / AMMD) (Burkholderia cepacia (strain AMMD))).